The primary structure comprises 64 residues: Short neurotoxin 1 (64 aa).

4 disulfides stabilise this stretch: Cys3–Cys26, Cys20–Cys43, Cys45–Cys56, and Cys57–Cys62.

This sequence belongs to the three-finger toxin family. Short-chain subfamily. Type I alpha-neurotoxin sub-subfamily. Expressed by the venom gland.

It localises to the secreted. Binds to muscle nicotinic acetylcholine receptor (nAChR) and inhibit acetylcholine from binding to the receptor, thereby impairing neuromuscular transmission. In Bungarus fasciatus (Banded krait), this protein is Short neurotoxin 1.